A 187-amino-acid polypeptide reads, in one-letter code: Orotate phosphoribosyltransferase (187 aa).

5-phospho-alpha-D-ribose 1-diphosphate contacts are provided by residues R98, K99, K102, H104, and 128–136; that span reads EDVTTTGGS. 2 residues coordinate orotate: T132 and R160.

Belongs to the purine/pyrimidine phosphoribosyltransferase family. PyrE subfamily. Homodimer. Requires Mg(2+) as cofactor.

The catalysed reaction is orotidine 5'-phosphate + diphosphate = orotate + 5-phospho-alpha-D-ribose 1-diphosphate. Its pathway is pyrimidine metabolism; UMP biosynthesis via de novo pathway; UMP from orotate: step 1/2. Its function is as follows. Catalyzes the transfer of a ribosyl phosphate group from 5-phosphoribose 1-diphosphate to orotate, leading to the formation of orotidine monophosphate (OMP). In Rhodopseudomonas palustris (strain BisB5), this protein is Orotate phosphoribosyltransferase.